Here is a 219-residue protein sequence, read N- to C-terminus: Guanylate kinase (219 aa).

The region spanning 15–194 (GLMFVLSSPS…AFAEVQSILK (180 aa)) is the Guanylate kinase-like domain. An ATP-binding site is contributed by 22-29 (SPSGAGKT).

This sequence belongs to the guanylate kinase family.

The protein resides in the cytoplasm. It carries out the reaction GMP + ATP = GDP + ADP. Its function is as follows. Essential for recycling GMP and indirectly, cGMP. The polypeptide is Guanylate kinase (Bradyrhizobium diazoefficiens (strain JCM 10833 / BCRC 13528 / IAM 13628 / NBRC 14792 / USDA 110)).